The following is a 433-amino-acid chain: MGEEYEVEIGPVAHGGHCIARTSEGQVLFVRHALPGERVLARVTEGEEGARYLRADAVEILDASKDRVEAPCPYAGPGRCGGCDWQHAKPGAQRRLKGEVIAEQLQRLAGLTPEEAGWDGTVMPAEGDKLPAGEVPAWRTRVQYAVDADGNAGLRRHRSHEVEPIEHCMIAAPGVSELGIEERDWSGMESVDAIAATGSQDRMVILEPRPGARLPLVELDKPVSVMRVEEKDGGIHRVHGRAFVRERADGRTYRVGSGGFWQVHPMAADTLVKAVMQGLLPRKGDMALDLYCGVGLFAGALADRLGDKGAVLGIESGKRAVEDARHNLAAFERVRIEQGKVEAVLPRTGITEVDLIVLDPPRAGAGKKTVEQLVSLGARKIAYVACDPAALARDLGYFRDGGYKVRTLRAFDLFPMTHHVECVAILEPAAKGL.

The region spanning Met-1–Glu-59 is the TRAM domain. The [4Fe-4S] cluster site is built by Cys-72, Cys-80, Cys-83, and Cys-168. Residues Gln-262, Tyr-291, Glu-315, and Asp-359 each contribute to the S-adenosyl-L-methionine site. The Nucleophile role is filled by Cys-386.

It belongs to the class I-like SAM-binding methyltransferase superfamily. RNA M5U methyltransferase family.

This is an uncharacterized protein from Streptomyces avermitilis (strain ATCC 31267 / DSM 46492 / JCM 5070 / NBRC 14893 / NCIMB 12804 / NRRL 8165 / MA-4680).